The chain runs to 119 residues: Small ribosomal subunit protein bS6 (119 aa).

Belongs to the bacterial ribosomal protein bS6 family.

Functionally, binds together with bS18 to 16S ribosomal RNA. This chain is Small ribosomal subunit protein bS6, found in Buchnera aphidicola subsp. Baizongia pistaciae (strain Bp).